A 253-amino-acid chain; its full sequence is Tetraspanin-3 (253 aa).

The Cytoplasmic segment spans residues M1 to T11. Residues V12 to A32 traverse the membrane as a helical segment. Over Y33–T50 the chain is Extracellular. The helical transmembrane segment at L51 to G71 threads the bilayer. Topologically, residues C72–T85 are cytoplasmic. A helical membrane pass occupies residues F86–V106. Topologically, residues Y107–V212 are extracellular. N-linked (GlcNAc...) asparagine glycosylation is found at N127, N152, N167, and N183. A helical transmembrane segment spans residues I213–V233. Over L234–A253 the chain is Cytoplasmic.

It belongs to the tetraspanin (TM4SF) family. In terms of assembly, interacts with claudin-11/CLDN11 and integrins.

The protein localises to the membrane. In terms of biological role, regulates the proliferation and migration of oligodendrocytes, a process essential for normal myelination and repair. This is Tetraspanin-3 (TSPAN3) from Bos taurus (Bovine).